Consider the following 118-residue polypeptide: MKAKVLKSKIANRLKRKRRIRAKISGCASLPRVSVFRSNRYLSVQAINDATATTLTSLSSKATGHKANKEGGAALGAAFAAKLKEVGISQIVFDRNGYQYHGVIAAFGDALRENEIKF.

Belongs to the universal ribosomal protein uL18 family. In terms of assembly, part of the 50S ribosomal subunit; part of the 5S rRNA/L5/L18/L25 subcomplex. Contacts the 5S and 23S rRNAs.

This is one of the proteins that bind and probably mediate the attachment of the 5S RNA into the large ribosomal subunit, where it forms part of the central protuberance. This chain is Large ribosomal subunit protein uL18, found in Sulfurimonas denitrificans (strain ATCC 33889 / DSM 1251) (Thiomicrospira denitrificans (strain ATCC 33889 / DSM 1251)).